The following is a 505-amino-acid chain: Maturase K (505 aa).

The protein belongs to the intron maturase 2 family. MatK subfamily.

Its subcellular location is the plastid. The protein resides in the chloroplast. Usually encoded in the trnK tRNA gene intron. Probably assists in splicing its own and other chloroplast group II introns. In Kunzea ericoides (White teatree), this protein is Maturase K.